The primary structure comprises 37 residues: Large ribosomal subunit protein bL36 (37 aa).

It belongs to the bacterial ribosomal protein bL36 family.

This Ureaplasma urealyticum serovar 10 (strain ATCC 33699 / Western) protein is Large ribosomal subunit protein bL36.